Reading from the N-terminus, the 652-residue chain is Sodium-dependent phosphate transporter 1-A (652 aa).

Residues Met-1 to Asp-25 are Cytoplasmic-facing. A helical transmembrane segment spans residues Val-26–Ala-46. Over Asn-47 to Gln-66 the chain is Extracellular. Residues Ala-67 to Ser-87 traverse the membrane as a helical segment. The Cytoplasmic segment spans residues Glu-88–Glu-104. A helical membrane pass occupies residues Ala-105 to Ala-125. At Ser-126 to Arg-162 the chain is on the extracellular side. Residues Ile-163 to Tyr-183 traverse the membrane as a helical segment. Residues Phe-184 to Arg-201 lie on the Cytoplasmic side of the membrane. The helical transmembrane segment at Ala-202–Gly-222 threads the bilayer. Over Ala-223–Trp-234 the chain is Extracellular. The chain crosses the membrane as a helical span at residues Gly-235–Val-255. At Cys-256–Glu-482 the chain is on the cytoplasmic side. The interval Thr-278 to Pro-308 is disordered. Residues Val-281–Pro-295 show a composition bias toward basic and acidic residues. Over residues Pro-297–Pro-308 the composition is skewed to pro residues. The helical transmembrane segment at Val-483–Gly-503 threads the bilayer. Topologically, residues Gly-504–Pro-531 are extracellular. The chain crosses the membrane as a helical span at residues Thr-532–Gly-552. The Cytoplasmic portion of the chain corresponds to Arg-553 to Gly-571. The helical transmembrane segment at Phe-572 to Val-592 threads the bilayer. Residues Ser-593 to Asn-621 lie on the Extracellular side of the membrane. Residues Ile-622–Ala-642 traverse the membrane as a helical segment. Residues Leu-643–Thr-652 lie on the Cytoplasmic side of the membrane.

The protein belongs to the inorganic phosphate transporter (PiT) (TC 2.A.20) family.

The protein localises to the membrane. In terms of biological role, sodium-phosphate symporter which plays a fundamental housekeeping role in phosphate transport. The chain is Sodium-dependent phosphate transporter 1-A (slc20a1a) from Danio rerio (Zebrafish).